The primary structure comprises 326 residues: DnaJ homolog subfamily B member 6 (326 aa).

Residues Val-2–Gly-69 enclose the J domain. The tract at residues Val-2–Gly-146 is interaction with HSP70. Positions Phe-119–Arg-242 are interaction with KRT18. Arg-135 carries the omega-N-methylarginine modification. The interval Ala-249 to His-326 is disordered. Residue Ser-277 is modified to Phosphoserine.

Homooligomer. Interacts with BAG3, HSPB8 and STUB1. Interacts with ALKBH1. Interacts with HSP70, KRT18 and PTTG.

The protein localises to the cytoplasm. The protein resides in the perinuclear region. Its subcellular location is the nucleus. It is found in the myofibril. It localises to the sarcomere. The protein localises to the z line. Its function is as follows. Has a stimulatory effect on the ATPase activity of HSP70 in a dose-dependent and time-dependent manner and hence acts as a co-chaperone of HSP70. Plays an indispensable role in the organization of KRT8/KRT18 filaments. Acts as an endogenous molecular chaperone for neuronal proteins including huntingtin. Suppresses aggregation and toxicity of polyglutamine-containing, aggregation-prone proteins. Also reduces cellular toxicity and caspase-3 activity. In Pongo abelii (Sumatran orangutan), this protein is DnaJ homolog subfamily B member 6 (DNAJB6).